Here is a 434-residue protein sequence, read N- to C-terminus: [Pyruvate dehydrogenase (acetyl-transferring)] kinase isozyme 1, mitochondrial (434 aa).

A mitochondrion-targeting transit peptide spans 1 to 26; sequence MRLARLLRGGTSVRPLCAVPCASRSL. Y136 carries the post-translational modification Phosphotyrosine; by FGFR1. Residues 161-391 enclose the Histidine kinase domain; the sequence is TEYKESFGVD…DAVIYIKALS (231 aa). Y241 bears the Phosphotyrosine; by FGFR1, ABL1, FLT3 and JAK2 mark. Y242 carries the post-translational modification Phosphotyrosine; by FGFR1. ATP is bound by residues 277–284, D316, 335–336, and 352–357; these read ELFKNAMR, ST, and GFGYGL. At T336 the chain carries Phosphothreonine. Position 403 is an N6-succinyllysine (K403).

The protein belongs to the PDK/BCKDK protein kinase family. In terms of assembly, homodimer, and heterodimer with PDK2. Interacts with the pyruvate dehydrogenase complex subunit DLAT, and is part of the multimeric pyruvate dehydrogenase complex that contains multiple copies of pyruvate dehydrogenase (E1), dihydrolipoamide acetyltransferase (DLAT, E2) and lipoamide dehydrogenase (DLD, E3). Interacts with phosphoglycerate kinase PGK1; the interaction is direct, occurs under hypoxic conditions and leads to PDK1-mediated inhibition of pyruvate dehydrogenase complex activity. Phosphorylated by constitutively activated ABL1, FGFR1, FLT3 and JAK2 (in vitro), and this may also occur in cancer cells that express constitutively activated ABL1, FGFR1, FLT3 and JAK2. Phosphorylation at Tyr-241 and Tyr-242 strongly increases kinase activity, while phosphorylation at Tyr-136 has a lesser effect. Phosphorylated under hypoxic conditions at Thr-336 by phosphoglycerate kinase PGK1 which has an activating effect.

It localises to the mitochondrion matrix. It carries out the reaction L-seryl-[pyruvate dehydrogenase E1 alpha subunit] + ATP = O-phospho-L-seryl-[pyruvate dehydrogenase E1 alpha subunit] + ADP + H(+). Kinase that plays a key role in regulation of glucose and fatty acid metabolism and homeostasis via phosphorylation of the pyruvate dehydrogenase subunits PDHA1 and PDHA2. This inhibits pyruvate dehydrogenase activity, and thereby regulates metabolite flux through the tricarboxylic acid cycle, down-regulates aerobic respiration and inhibits the formation of acetyl-coenzyme A from pyruvate. Plays an important role in cellular responses to hypoxia and is important for cell proliferation under hypoxia. The polypeptide is [Pyruvate dehydrogenase (acetyl-transferring)] kinase isozyme 1, mitochondrial (Pdk1) (Mus musculus (Mouse)).